The chain runs to 132 residues: Small ribosomal subunit protein uS8 (132 aa).

This sequence belongs to the universal ribosomal protein uS8 family. In terms of assembly, part of the 30S ribosomal subunit. Contacts proteins S5 and S12.

Its function is as follows. One of the primary rRNA binding proteins, it binds directly to 16S rRNA central domain where it helps coordinate assembly of the platform of the 30S subunit. The polypeptide is Small ribosomal subunit protein uS8 (Methylocella silvestris (strain DSM 15510 / CIP 108128 / LMG 27833 / NCIMB 13906 / BL2)).